Reading from the N-terminus, the 117-residue chain is Cell cycle protein GpsB (117 aa).

Residues 32 to 70 (LDNVIKDYDAFVKENQRLQDENERLLAKVDELTRQVQVG) adopt a coiled-coil conformation.

This sequence belongs to the GpsB family. As to quaternary structure, forms polymers through the coiled coil domains. Interacts with PBP1, MreC and EzrA.

Its subcellular location is the cytoplasm. Its function is as follows. Divisome component that associates with the complex late in its assembly, after the Z-ring is formed, and is dependent on DivIC and PBP2B for its recruitment to the divisome. Together with EzrA, is a key component of the system that regulates PBP1 localization during cell cycle progression. Its main role could be the removal of PBP1 from the cell pole after pole maturation is completed. Also contributes to the recruitment of PBP1 to the division complex. Not essential for septum formation. This chain is Cell cycle protein GpsB, found in Levilactobacillus brevis (strain ATCC 367 / BCRC 12310 / CIP 105137 / JCM 1170 / LMG 11437 / NCIMB 947 / NCTC 947) (Lactobacillus brevis).